The primary structure comprises 122 residues: Phosphoribosyl-ATP pyrophosphatase (122 aa).

This sequence belongs to the PRA-PH family.

It is found in the cytoplasm. It catalyses the reaction 1-(5-phospho-beta-D-ribosyl)-ATP + H2O = 1-(5-phospho-beta-D-ribosyl)-5'-AMP + diphosphate + H(+). It participates in amino-acid biosynthesis; L-histidine biosynthesis; L-histidine from 5-phospho-alpha-D-ribose 1-diphosphate: step 2/9. In Burkholderia thailandensis (strain ATCC 700388 / DSM 13276 / CCUG 48851 / CIP 106301 / E264), this protein is Phosphoribosyl-ATP pyrophosphatase.